A 495-amino-acid chain; its full sequence is Transcription termination/antitermination protein NusA (495 aa).

One can recognise an S1 motif domain in the interval 135–200 (GKIVTGTVKK…KTAQLFVTRS (66 aa)). A KH domain is found at 302–374 (NHSMDIAVEA…LDEEFAQILV (73 aa)).

It belongs to the NusA family. As to quaternary structure, monomer. Binds directly to the core enzyme of the DNA-dependent RNA polymerase and to nascent RNA.

The protein resides in the cytoplasm. Participates in both transcription termination and antitermination. This chain is Transcription termination/antitermination protein NusA, found in Haemophilus influenzae (strain ATCC 51907 / DSM 11121 / KW20 / Rd).